Reading from the N-terminus, the 251-residue chain is Pyrroloquinoline-quinone synthase (251 aa).

The protein belongs to the PqqC family.

It catalyses the reaction 6-(2-amino-2-carboxyethyl)-7,8-dioxo-1,2,3,4,7,8-hexahydroquinoline-2,4-dicarboxylate + 3 O2 = pyrroloquinoline quinone + 2 H2O2 + 2 H2O + H(+). Its pathway is cofactor biosynthesis; pyrroloquinoline quinone biosynthesis. Its function is as follows. Ring cyclization and eight-electron oxidation of 3a-(2-amino-2-carboxyethyl)-4,5-dioxo-4,5,6,7,8,9-hexahydroquinoline-7,9-dicarboxylic-acid to PQQ. The sequence is that of Pyrroloquinoline-quinone synthase from Pseudomonas putida (strain ATCC 47054 / DSM 6125 / CFBP 8728 / NCIMB 11950 / KT2440).